We begin with the raw amino-acid sequence, 369 residues long: Phosphoribosyl pyrophosphate synthase-associated protein 2 (369 aa).

An N-acetylmethionine modification is found at M1. S219, S227, and S233 each carry phosphoserine.

This sequence belongs to the ribose-phosphate pyrophosphokinase family. In terms of assembly, binds to PRPS1 and PRPS2. In terms of tissue distribution, ubiquitous.

Its function is as follows. Seems to play a negative regulatory role in 5-phosphoribose 1-diphosphate synthesis. The sequence is that of Phosphoribosyl pyrophosphate synthase-associated protein 2 (Prpsap2) from Rattus norvegicus (Rat).